We begin with the raw amino-acid sequence, 157 residues long: UPF0251 protein CLD_3165 (157 aa).

The protein belongs to the UPF0251 family.

The chain is UPF0251 protein CLD_3165 from Clostridium botulinum (strain Okra / Type B1).